A 502-amino-acid polypeptide reads, in one-letter code: ATP synthase subunit alpha (502 aa).

The disordered stretch occupies residues 115–139 (VDGLGPVETTETRPIESPAPGVMDR). 169 to 176 (GDRQTGKT) contacts ATP.

This sequence belongs to the ATPase alpha/beta chains family. F-type ATPases have 2 components, CF(1) - the catalytic core - and CF(0) - the membrane proton channel. CF(1) has five subunits: alpha(3), beta(3), gamma(1), delta(1), epsilon(1). CF(0) has three main subunits: a(1), b(2) and c(9-12). The alpha and beta chains form an alternating ring which encloses part of the gamma chain. CF(1) is attached to CF(0) by a central stalk formed by the gamma and epsilon chains, while a peripheral stalk is formed by the delta and b chains.

Its subcellular location is the cell membrane. The catalysed reaction is ATP + H2O + 4 H(+)(in) = ADP + phosphate + 5 H(+)(out). Functionally, produces ATP from ADP in the presence of a proton gradient across the membrane. The alpha chain is a regulatory subunit. The polypeptide is ATP synthase subunit alpha (Geobacillus thermodenitrificans (strain NG80-2)).